We begin with the raw amino-acid sequence, 78 residues long: Large ribosomal subunit protein bL28 (78 aa).

It belongs to the bacterial ribosomal protein bL28 family.

The polypeptide is Large ribosomal subunit protein bL28 (Pectobacterium atrosepticum (strain SCRI 1043 / ATCC BAA-672) (Erwinia carotovora subsp. atroseptica)).